A 525-amino-acid polypeptide reads, in one-letter code: Cytochrome P450 monooxygenase tpcC (525 aa).

The helical transmembrane segment at 13 to 33 (LPVTLVSLLVGSIFYFCYLTV) threads the bilayer. Position 457 (Cys-457) interacts with heme.

This sequence belongs to the cytochrome P450 family. Heme serves as cofactor.

Its subcellular location is the membrane. Its pathway is secondary metabolite biosynthesis; terpenoid biosynthesis. Functionally, cytochrome P450 monooxygenase; part of the gene cluster that mediates the biosynthesis of terpestacin. The bifunctional terpene synthase tpcA converts isopentenyl diphosphate (IPP) and dimethylallyl diphosphate (DMAPP) into the sesterterpene preterpestacin I. The C-terminal prenyltransferase (PT) domain of tpcA catalyzes formation of GFPP, whereas the N-terminal terpene cyclase (TC) domain catalyzes the cyclization of GFPP into preterpestacin I. The cytochrome P450 monooxygenase tpcB then hydroxylates preterpestacin I to yield 24-hydroxypreterpstacin I (renamed as preterpestacin II) whereas the cytochrome P450 monooxygenase tpcC further hydroxylates preterpestacin II to yield 16,17-dihydroxypreterpestacin II (renamed as preterpestacin III). Finally, the FAD-dependent monooxygenase tpcD converts preterpestacin III into terpestacin. The protein is Cytochrome P450 monooxygenase tpcC of Cochliobolus heterostrophus (strain C5 / ATCC 48332 / race O) (Southern corn leaf blight fungus).